We begin with the raw amino-acid sequence, 430 residues long: F-box/kelch-repeat protein At4g33290 (430 aa).

In terms of domain architecture, F-box spans 1–44 (MITDLPKDLIEEILSRVSMTSMRVVRLTCKSWNTLSNSESFKKM). 3 Kelch repeats span residues 161–207 (LLRF…CVQG), 312–363 (VPFI…IIEE), and 383–430 (LVRI…RPTR).

This is F-box/kelch-repeat protein At4g33290 from Arabidopsis thaliana (Mouse-ear cress).